A 602-amino-acid chain; its full sequence is Sodium- and chloride-dependent GABA transporter 2 (602 aa).

Residues 1–40 (MDNRVSGTTSNGETKPVCPVMEKVEEDGTLEREQWTNKME) lie on the Cytoplasmic side of the membrane. 3 consecutive transmembrane segments (helical) span residues 41 to 61 (FVLSVAGEIIGLGNVWRFPYL), 68 to 88 (GAFFIPYLIFLFTCGIPVFFL), and 121 to 141 (IVSLLNVYYIVVLAWALFYLF). At 142–206 (SSFTTDLPWG…GIQHLGSLRW (65 aa)) the chain is on the extracellular side. Cysteine 153 and cysteine 162 are joined by a disulfide. N-linked (GlcNAc...) asparagine glycans are attached at residues asparagine 169, asparagine 173, and asparagine 178. 2 consecutive transmembrane segments (helical) span residues 207 to 227 (ELVLCLLLAWIICYFCIWKGV) and 233 to 253 (VVYFTATFPYLMLVVLLIRGV). Residue asparagine 269 is glycosylated (N-linked (GlcNAc...) asparagine). 7 helical membrane passes run 282-302 (AGTQIFFSFAICLGCLTALGS), 319-339 (ILNSSTSFVAGFAIFSILGFM), 366-386 (VVMLPFSPLWACCFFFMVVLL), 418-438 (ILILIVSVVSFFIGLIMLTEG), 453-473 (GMCLLFVAIFESLCVAWVYGA), 490-510 (PLIKYCWLFFTPAVCLATFLF), and 528-548 (WWGDALGWLLALSSMVCIPAW). At 549–602 (SIYKLRTLKGPLRERLRQLVCPAEDLPQKSQPELTSPATPMTSLLRLTELESNC) the chain is on the cytoplasmic side. Residue threonine 587 is modified to Phosphothreonine. Serine 591 carries the post-translational modification Phosphoserine.

The protein belongs to the sodium:neurotransmitter symporter (SNF) (TC 2.A.22) family. SLC6A13 subfamily. As to expression, brain, retina, and peripheral tissues. Expressed in hepatocytes (at protein level).

It localises to the cell membrane. The protein resides in the basolateral cell membrane. It carries out the reaction 4-aminobutanoate(out) + chloride(out) + 2 Na(+)(out) = 4-aminobutanoate(in) + chloride(in) + 2 Na(+)(in). The enzyme catalyses taurine(out) + chloride(out) + 2 Na(+)(out) = taurine(in) + chloride(in) + 2 Na(+)(in). The catalysed reaction is beta-alanine(out) + chloride(out) + 2 Na(+)(out) = beta-alanine(in) + chloride(in) + 2 Na(+)(in). It catalyses the reaction hypotaurine(out) + chloride(out) + 2 Na(+)(out) = hypotaurine(in) + chloride(in) + 2 Na(+)(in). Its activity is regulated as follows. GABA transport is inhibited by beta-alanine, L-2,4-Diaminobutyric acid, hypotaurine and nipecotic acid. Taurine transport is inhibited by hypotaurine, beta-alanine and nipecotic acid. Mediates sodium- and chloride-dependent transport of gamma-aminobutyric acid (GABA). Mediates transport of taurine and is the major taurine transporter in hepatocytes. Can also mediate transport of beta-alanine and hypotaurine. In Rattus norvegicus (Rat), this protein is Sodium- and chloride-dependent GABA transporter 2 (Slc6a13).